Consider the following 434-residue polypeptide: Nicotinate phosphoribosyltransferase (434 aa).

At H242 the chain carries Phosphohistidine; by autocatalysis.

It belongs to the NAPRTase family. Transiently phosphorylated on a His residue during the reaction cycle. Phosphorylation strongly increases the affinity for substrates and increases the rate of nicotinate D-ribonucleotide production. Dephosphorylation regenerates the low-affinity form of the enzyme, leading to product release.

The enzyme catalyses nicotinate + 5-phospho-alpha-D-ribose 1-diphosphate + ATP + H2O = nicotinate beta-D-ribonucleotide + ADP + phosphate + diphosphate. The protein operates within cofactor biosynthesis; NAD(+) biosynthesis; nicotinate D-ribonucleotide from nicotinate: step 1/1. Functionally, catalyzes the synthesis of beta-nicotinate D-ribonucleotide from nicotinate and 5-phospho-D-ribose 1-phosphate at the expense of ATP. This Bartonella tribocorum (strain CIP 105476 / IBS 506) protein is Nicotinate phosphoribosyltransferase.